The sequence spans 360 residues: Putative F-box protein At5g55150 (360 aa).

One can recognise an F-box domain in the interval 6-54; that stretch reads SSWSEFLPELLNTVFHNLNDARDILNCATVCSSWKDSSSAVYYSRTFSP.

This chain is Putative F-box protein At5g55150, found in Arabidopsis thaliana (Mouse-ear cress).